The following is a 262-amino-acid chain: tRNA pseudouridine synthase A (262 aa).

D55 (nucleophile) is an active-site residue. Y116 is a binding site for substrate.

This sequence belongs to the tRNA pseudouridine synthase TruA family. In terms of assembly, homodimer.

It carries out the reaction uridine(38/39/40) in tRNA = pseudouridine(38/39/40) in tRNA. In terms of biological role, formation of pseudouridine at positions 38, 39 and 40 in the anticodon stem and loop of transfer RNAs. The sequence is that of tRNA pseudouridine synthase A from Bdellovibrio bacteriovorus (strain ATCC 15356 / DSM 50701 / NCIMB 9529 / HD100).